A 366-amino-acid chain; its full sequence is NAD(P)H-quinone oxidoreductase subunit 1, chloroplastic (366 aa).

7 consecutive transmembrane segments (helical) span residues 28 to 48 (IWLLVPIFTPLLGIIIGVLVI), 105 to 125 (IAVISILLSYSVIPFGYHLVL), 128 to 148 (LSIGVFLWIAISSIAPIGLLM), 250 to 270 (SGIKFGLFYVASYLNLLVSSL), 271 to 291 (FVTVLYLGGWNLSIPYIFIFI), 303 to 323 (IFGMTIGIFITLAKAYLFLFI), and 346 to 366 (FLLPISLGNLLLTTSFQLLSL).

The protein belongs to the complex I subunit 1 family. As to quaternary structure, NDH is composed of at least 16 different subunits, 5 of which are encoded in the nucleus.

The protein localises to the plastid. It localises to the chloroplast thylakoid membrane. The enzyme catalyses a plastoquinone + NADH + (n+1) H(+)(in) = a plastoquinol + NAD(+) + n H(+)(out). It catalyses the reaction a plastoquinone + NADPH + (n+1) H(+)(in) = a plastoquinol + NADP(+) + n H(+)(out). NDH shuttles electrons from NAD(P)H:plastoquinone, via FMN and iron-sulfur (Fe-S) centers, to quinones in the photosynthetic chain and possibly in a chloroplast respiratory chain. The immediate electron acceptor for the enzyme in this species is believed to be plastoquinone. Couples the redox reaction to proton translocation, and thus conserves the redox energy in a proton gradient. In Nandina domestica (Heavenly bamboo), this protein is NAD(P)H-quinone oxidoreductase subunit 1, chloroplastic.